The sequence spans 327 residues: Succinylglutamate desuccinylase (327 aa).

Zn(2+) contacts are provided by His53, Glu56, and His146. Glu209 is an active-site residue.

It belongs to the AspA/AstE family. Succinylglutamate desuccinylase subfamily. It depends on Zn(2+) as a cofactor.

It catalyses the reaction N-succinyl-L-glutamate + H2O = L-glutamate + succinate. It participates in amino-acid degradation; L-arginine degradation via AST pathway; L-glutamate and succinate from L-arginine: step 5/5. Functionally, transforms N(2)-succinylglutamate into succinate and glutamate. This Serratia proteamaculans (strain 568) protein is Succinylglutamate desuccinylase.